We begin with the raw amino-acid sequence, 449 residues long: MDNIGAADAATSSGISGLLSGNSFLGAGIGLMGFGAGLAILRRGLISGASLVKRRMLVSVEIPSKEKSYNAFLHWMSTVPKRYSNQLAVESNRQLKMPQNAREKPDKQVANRIFSLVPGPGKHYIKYKKCWIQVERERSNRLQDLTTGTPWETITLTTLSRDRGIFSELLLEAQKFMQSAQKNKTTIYTAWATEWKPFGHPRSKRMLSSVVLESNVKKMITDDVHDFLRNSQWYDTRGIPYRRGYLLYGPPGSGKTSFLYALAGELDYDICVLNLAEKGLTDDRLNHLLSNVPPKAVVLLEDVDSAFQGRERSGEVGFHANVTFSGLLNALDGVTSSDERIIFMTTNHPEKLDPALVRPGRVDVKAYLGNATPEQVREMFTRFYGHSPEMADDLSDIVCPKNTSMASLQGLFVMNKSSPADAVDMAKELPDNPPSTPFSFNVHRKSLSV.

The Mitochondrial intermembrane portion of the chain corresponds to 1–20 (MDNIGAADAATSSGISGLLS). Residues 21–41 (GNSFLGAGIGLMGFGAGLAIL) form a helical membrane-spanning segment. The Mitochondrial matrix segment spans residues 42–449 (RRGLISGASL…FNVHRKSLSV (408 aa)). 249-256 (GPPGSGKT) provides a ligand contact to ATP.

This sequence belongs to the AAA ATPase family. BCS1 subfamily.

It is found in the mitochondrion inner membrane. It catalyses the reaction ATP + H2O = ADP + phosphate + H(+). Chaperone necessary for the incorporation of Rieske iron-sulfur protein rip1 into the mitochondrial respiratory chain complex III. In Schizosaccharomyces pombe (strain 972 / ATCC 24843) (Fission yeast), this protein is Probable mitochondrial chaperone bcs1.